We begin with the raw amino-acid sequence, 354 residues long: tRNA-specific 2-thiouridylase MnmA (354 aa).

ATP is bound by residues 6–13 and L33; that span reads LLSGGVDS. The active-site Nucleophile is C100. Cysteines 100 and 195 form a disulfide. G123 contacts ATP. The segment at 145-147 is interaction with tRNA; sequence KDQ. C195 serves as the catalytic Cysteine persulfide intermediate.

It belongs to the MnmA/TRMU family.

Its subcellular location is the cytoplasm. It carries out the reaction S-sulfanyl-L-cysteinyl-[protein] + uridine(34) in tRNA + AH2 + ATP = 2-thiouridine(34) in tRNA + L-cysteinyl-[protein] + A + AMP + diphosphate + H(+). In terms of biological role, catalyzes the 2-thiolation of uridine at the wobble position (U34) of tRNA, leading to the formation of s(2)U34. This Borrelia duttonii (strain Ly) protein is tRNA-specific 2-thiouridylase MnmA.